Here is a 503-residue protein sequence, read N- to C-terminus: MLCAISGKVPRRPVLSPKSRTIFEKSLLEQYVKDTGNDPITNEPLSIEEIVEIVPSAQQASLTESTNSATLKANYSIPNLLTSLQNEWDAIMLENFKLRSTLDSLTKKLSTVMYERDAAKLVAAQLLMEKNEDSKDLPKSSQQAVAITREEFLQGLLQSSRDFVARGKLKAPKWPILKNLELLQAQNYSRNIKTFPYKELNKSMYYDKWVCMCRCEDGALHFTQLKDSKTITTITTPNPRTGGEHPAIISRGPCNRLLLLYPGNQITILDSKTNKVLREIEVDSANEIIYMYGHNEVNTEYFIWADNRGTIGFQSYEDDSQYIVHSAKSDVEYSSGVLHKDSLLLALYSPDGILDVYNLSSPDQASSRFPVDEEAKIKEVKFADNGYWMVVECDQTVVCFDLRKDVGTLAYPTYTIPEFKTGTVTYDIDDSGKNMIAYSNESNSLTIYKFDKKTKNWTKDEESALCLQSDTADFTDMDVVCGDGGIAAILKTNDSFNIVALTP.

The U-box domain occupies 1 to 71 (MLCAISGKVP…LTESTNSATL (71 aa)). The tract at residues 57–144 (AQQASLTEST…KDLPKSSQQA (88 aa)) is required for self-association. Residues 76–134 (SIPNLLTSLQNEWDAIMLENFKLRSTLDSLTKKLSTVMYERDAAKLVAAQLLMEKNEDS) are interaction with CEF1. 3 WD repeats span residues 328–367 (KSDVEYSSGVLHKDSLLLALYSPDGILDVYNLSSPDQASS), 372–410 (DEEAKIKEVKFADNGYWMVVECDQTVVCFDLRKDVGTLA), and 418–458 (EFKT…KNWT).

It belongs to the WD repeat PRP19 family. As to quaternary structure, homotetramer. Component of the NTC complex (or PRP19-associated complex), composed of at least CEF1, CLF1, ISY1, NTC20, SNT309, SYF1, SYF2, and PRP19. The NTC complex associates with the spliceosome after the release of the U1 and U4 snRNAs and forms the CWC spliceosome subcomplex (or CEF1-associated complex) reminiscent of a late-stage spliceosome composed also of the U2, U5 and U6 snRNAs and at least BUD13, BUD31, BRR2, CDC40, CUS1, CWC2, CWC15, CWC21, CWC22, CWC23, CWC24, CWC25, CWC27, ECM2, HSH155, IST3, LEA1, MSL1, PRP8, PRP9, PRP11, PRP21, PRP22, PRP45, PRP46, SLU7, SMB1, SMD1, SMD2, SMD3, SMX2, SMX3, SNU114, SPP2, RSE1 and YJU2. Interacts with CLF1, ISY1, NTC20, PRP19, PRP46, SYF1 and SYF2. Interacts with CWC2.

Its subcellular location is the nucleus. It catalyses the reaction S-ubiquitinyl-[E2 ubiquitin-conjugating enzyme]-L-cysteine + [acceptor protein]-L-lysine = [E2 ubiquitin-conjugating enzyme]-L-cysteine + N(6)-ubiquitinyl-[acceptor protein]-L-lysine.. Its pathway is protein modification; protein ubiquitination. Its function is as follows. Probable ubiquitin-protein ligase involved in pre-mRNA splicing. Acts as a central component of the NTC complex (or PRP19-associated complex) that associates to the spliceosome to mediate conformational rearrangement or to stabilize the structure of the spliceosome after U4 snRNA dissociation, which leads to spliceosome maturation. It is also probably involved in DNA repair. In Saccharomyces cerevisiae (strain ATCC 204508 / S288c) (Baker's yeast), this protein is Pre-mRNA-processing factor 19 (PRP19).